Here is a 156-residue protein sequence, read N- to C-terminus: Ribosomal RNA large subunit methyltransferase H (156 aa).

S-adenosyl-L-methionine contacts are provided by residues Leu-73, Gly-104, and 123–128 (ISSMTL).

This sequence belongs to the RNA methyltransferase RlmH family. In terms of assembly, homodimer.

It localises to the cytoplasm. It catalyses the reaction pseudouridine(1915) in 23S rRNA + S-adenosyl-L-methionine = N(3)-methylpseudouridine(1915) in 23S rRNA + S-adenosyl-L-homocysteine + H(+). Specifically methylates the pseudouridine at position 1915 (m3Psi1915) in 23S rRNA. The polypeptide is Ribosomal RNA large subunit methyltransferase H (Burkholderia lata (strain ATCC 17760 / DSM 23089 / LMG 22485 / NCIMB 9086 / R18194 / 383)).